We begin with the raw amino-acid sequence, 911 residues long: ATP-dependent DNA helicase Q-like 5 (911 aa).

The segment at 1-84 (MDFDSDSDGS…PPPSPLFTNL (84 aa)) is disordered. Positions 20-48 (SFPSSPPQLQSPAKHVPPVSRKMTSSSSR) are enriched in low complexity. A compositionally biased stretch (pro residues) spans 54 to 79 (PTHPPPNPSQEAPVPSPYPPPPPPSP). The Helicase ATP-binding domain maps to 278-448 (IKMILGGSST…MSSLEIPSTN (171 aa)). ATP is bound at residue 291–298 (LPTGAGKS). Positions 390-393 (DEAH) match the DEAH box motif. One can recognise a Helicase C-terminal domain in the interval 470–628 (RMKDLLILME…VFSTETKQHE (159 aa)).

Belongs to the helicase family. RecQ subfamily. In terms of tissue distribution, mostly expressed in roots, seedlings, shoots, shoot apical mersitem, flowers, and siliques.

It is found in the nucleus. It catalyses the reaction Couples ATP hydrolysis with the unwinding of duplex DNA by translocating in the 3'-5' direction.. The enzyme catalyses ATP + H2O = ADP + phosphate + H(+). 3'-5' DNA helicase that may play a role in the repair of DNA. This chain is ATP-dependent DNA helicase Q-like 5 (RECQL5), found in Arabidopsis thaliana (Mouse-ear cress).